The following is a 150-amino-acid chain: Large ribosomal subunit protein bL9 (150 aa).

This sequence belongs to the bacterial ribosomal protein bL9 family.

Functionally, binds to the 23S rRNA. The polypeptide is Large ribosomal subunit protein bL9 (Corynebacterium glutamicum (strain ATCC 13032 / DSM 20300 / JCM 1318 / BCRC 11384 / CCUG 27702 / LMG 3730 / NBRC 12168 / NCIMB 10025 / NRRL B-2784 / 534)).